A 561-amino-acid polypeptide reads, in one-letter code: Carbohydrate sulfotransferase 15 (561 aa).

At 1 to 80 (MRHCINCCIQ…FLRFRKGKRC (80 aa)) the chain is on the cytoplasmic side. A helical; Signal-anchor for type II membrane protein membrane pass occupies residues 81 to 101 (SLVFGLIIMTLVMASYILSGA). The Lumenal segment spans residues 102-561 (HQELLISSPF…DDEAFAWKTT (460 aa)). 263 to 267 (KCGTT) serves as a coordination point for 3'-phosphoadenylyl sulfate. The N-linked (GlcNAc...) asparagine glycan is linked to asparagine 364. Arginine 392 and serine 400 together coordinate 3'-phosphoadenylyl sulfate.

Belongs to the sulfotransferase 1 family. Homodimer; disulfide-linked (Potential). The relevance of homodimerization is however unsure. May interact with phosphorylated proteins in resting B-cells, including HCK. Requires a divalent metal cation as cofactor. The cofactor is glutathione. Post-translationally, glycosylated.

Its subcellular location is the golgi apparatus membrane. The catalysed reaction is dermatan 4'-sulfate + n 3'-phosphoadenylyl sulfate = dermatan 4',6'-bissulfate + n adenosine 3',5'-bisphosphate + n H(+). It carries out the reaction chondroitin 4'-sulfate + n 3'-phosphoadenylyl sulfate = chondroitin 4',6'-bissulfate + n adenosine 3',5'-bisphosphate + n H(+). With respect to regulation, inhibited by phenyl beta-GalNAc(4,6-SO(4)). In terms of biological role, sulfotransferase that transfers sulfate from 3'-phosphoadenosine 5'-phosphosulfate (PAPS) to the C-6 hydroxyl group of the GalNAc 4-sulfate residue of chondroitin sulfate A and forms chondroitin sulfate E containing GlcA-GalNAc(4,6-SO(4)) repeating units. It also transfers sulfate to a unique non-reducing terminal sequence, GalNAc(4SO4)-GlcA(2SO4)-GalNAc(6SO4), to yield a highly sulfated structure similar to the structure found in thrombomodulin chondroitin sulfate. May also act as a B-cell receptor involved in BCR ligation-mediated early activation that mediate regulatory signals key to B-cell development and/or regulation of B-cell-specific RAG expression; however such results are unclear in vivo. This Rattus norvegicus (Rat) protein is Carbohydrate sulfotransferase 15 (Chst15).